The chain runs to 208 residues: MKFHSFLAAGLCLLTSLSASASIQLTVPSEVELLLVDSQEVKLDSSFFSTTSTLKLDDGEHQIVFRYNPVFKQGKDNIIVSSDIIVSKFTATNQDISFVFPSYNSPEKAKAFNTDLNWELKDQNDKNIPFAQAKLVYDGVQIGHNIQFELAKFNTTEHVAAFKQDMITVTHKEIKNEKGENTAEQMLNYWYEKADKETQERFKTSISN.

Residues 1–21 (MKFHSFLAAGLCLLTSLSASA) form the signal peptide.

This sequence belongs to the UPF0319 family.

The polypeptide is UPF0319 protein VSAL_I2129 (Aliivibrio salmonicida (strain LFI1238) (Vibrio salmonicida (strain LFI1238))).